The sequence spans 148 residues: 3-dehydroquinate dehydratase (148 aa).

Y24 acts as the Proton acceptor in catalysis. Substrate-binding residues include N75, H81, and D88. H101 (proton donor) is an active-site residue. Residues 102–103 (LS) and R112 contribute to the substrate site.

This sequence belongs to the type-II 3-dehydroquinase family. In terms of assembly, homododecamer.

It catalyses the reaction 3-dehydroquinate = 3-dehydroshikimate + H2O. It participates in metabolic intermediate biosynthesis; chorismate biosynthesis; chorismate from D-erythrose 4-phosphate and phosphoenolpyruvate: step 3/7. Functionally, catalyzes a trans-dehydration via an enolate intermediate. In Bartonella henselae (strain ATCC 49882 / DSM 28221 / CCUG 30454 / Houston 1) (Rochalimaea henselae), this protein is 3-dehydroquinate dehydratase.